Reading from the N-terminus, the 72-residue chain is Prokaryotic ubiquitin-like protein Pup (72 aa).

A compositionally biased stretch (gly residues) spans 1 to 10 (MATRDSGGGQ). Positions 1-41 (MATRDSGGGQQRADRRAEEIDDVATEDTSASDLKERHEKLS) are disordered. A coiled-coil region spans residues 27–61 (DTSASDLKERHEKLSEDVDSLLDEIDDVLEENAEE). Positions 28–66 (TSASDLKERHEKLSEDVDSLLDEIDDVLEENAEEFVKGY) are ARC ATPase binding. Residues 32 to 41 (DLKERHEKLS) show a composition bias toward basic and acidic residues. Gln-72 is modified (deamidated glutamine). An Isoglutamyl lysine isopeptide (Gln-Lys) (interchain with K-? in acceptor proteins) cross-link involves residue Gln-72.

Belongs to the prokaryotic ubiquitin-like protein family. In terms of assembly, strongly interacts with the proteasome-associated ATPase ARC through a hydrophobic interface; the interacting region of Pup lies in its C-terminal half. There is one Pup binding site per ARC hexamer ring. In terms of processing, is modified by deamidation of its C-terminal glutamine to glutamate by the deamidase Dop, a prerequisite to the subsequent pupylation process.

It participates in protein degradation; proteasomal Pup-dependent pathway. In terms of biological role, protein modifier that is covalently attached to lysine residues of substrate proteins, thereby targeting them for proteasomal degradation. The tagging system is termed pupylation. The protein is Prokaryotic ubiquitin-like protein Pup of Frankia casuarinae (strain DSM 45818 / CECT 9043 / HFP020203 / CcI3).